A 311-amino-acid polypeptide reads, in one-letter code: Pyrimidine-specific ribonucleoside hydrolase RihA (311 aa).

His240 is an active-site residue.

Belongs to the IUNH family. RihA subfamily.

In terms of biological role, hydrolyzes cytidine or uridine to ribose and cytosine or uracil, respectively. This is Pyrimidine-specific ribonucleoside hydrolase RihA from Salmonella typhimurium (strain LT2 / SGSC1412 / ATCC 700720).